The chain runs to 214 residues: Pyridoxine/pyridoxamine 5'-phosphate oxidase (214 aa).

Residues 8–11 (RINY) and Lys66 contribute to the substrate site. FMN contacts are provided by residues 61-66 (RILLIK), 76-77 (FT), Arg82, Lys83, and Gln105. The substrate site is built by Tyr123, Arg127, and Ser131. FMN-binding positions include 140–141 (QS) and Trp184. 190–192 (RLH) contributes to the substrate binding site. Arg194 serves as a coordination point for FMN.

The protein belongs to the pyridoxamine 5'-phosphate oxidase family. Homodimer. It depends on FMN as a cofactor.

It catalyses the reaction pyridoxamine 5'-phosphate + O2 + H2O = pyridoxal 5'-phosphate + H2O2 + NH4(+). The enzyme catalyses pyridoxine 5'-phosphate + O2 = pyridoxal 5'-phosphate + H2O2. The protein operates within cofactor metabolism; pyridoxal 5'-phosphate salvage; pyridoxal 5'-phosphate from pyridoxamine 5'-phosphate: step 1/1. It functions in the pathway cofactor metabolism; pyridoxal 5'-phosphate salvage; pyridoxal 5'-phosphate from pyridoxine 5'-phosphate: step 1/1. Its function is as follows. Catalyzes the oxidation of either pyridoxine 5'-phosphate (PNP) or pyridoxamine 5'-phosphate (PMP) into pyridoxal 5'-phosphate (PLP). The protein is Pyridoxine/pyridoxamine 5'-phosphate oxidase of Burkholderia vietnamiensis (strain G4 / LMG 22486) (Burkholderia cepacia (strain R1808)).